Reading from the N-terminus, the 291-residue chain is Transmembrane protein 41B (291 aa).

A disordered region spans residues 1–39 (MAKGRVAERSQLGAHHTTPVGDGAAGTRGLAAPGSRDHQ). Phosphothreonine is present on threonine 18. Serine 35 is subject to Phosphoserine. Transmembrane regions (helical) follow at residues 52-72 (MSLL…FLVY), 109-129 (FYVQ…TFAI), 147-169 (LALF…LSYL), 197-217 (LINY…FINI), 225-245 (PLKV…FVAI), and 262-282 (SWNS…PAIF). The segment at 140-251 (GFLYPFPLAL…FVAIKAGTTL (112 aa)) is VTT domain; required for its function in autophagy.

The protein belongs to the TMEM41 family. In terms of assembly, interacts with VMP1. Interacts with COPA, COPB1, VDAC1 and ERLIN2. Interacts with ATG2A. Interacts with SURF4. (Microbial infection) Interacts with Zika virus NS4A protein and Yellow fever virus NS4B protein.

It is found in the endoplasmic reticulum membrane. The protein localises to the endomembrane system. It localises to the cytoplasm. It carries out the reaction a 1,2-diacyl-sn-glycero-3-phospho-L-serine(in) = a 1,2-diacyl-sn-glycero-3-phospho-L-serine(out). The catalysed reaction is cholesterol(in) = cholesterol(out). It catalyses the reaction a 1,2-diacyl-sn-glycero-3-phosphocholine(in) = a 1,2-diacyl-sn-glycero-3-phosphocholine(out). The enzyme catalyses a 1,2-diacyl-sn-glycero-3-phosphoethanolamine(in) = a 1,2-diacyl-sn-glycero-3-phosphoethanolamine(out). Phospholipid scramblase involved in lipid homeostasis and membrane dynamics processes. Has phospholipid scramblase activity toward cholesterol and phosphatidylserine, as well as phosphatidylethanolamine and phosphatidylcholine. Required for autophagosome formation: participates in early stages of autophagosome biogenesis at the endoplasmic reticulum (ER) membrane by reequilibrating the leaflets of the ER as lipids are extracted by ATG2 (ATG2A or ATG2B) to mediate autophagosome assembly. In addition to autophagy, involved in other processes in which phospholipid scramblase activity is required. Required for normal motor neuron development. In terms of biological role, (Microbial infection) Critical host factor required for infection by human coronaviruses SARS-CoV-2, HCoV-OC43, HCoV-NL63, and HCoV-229E, as well as all flaviviruses tested such as Zika virus and Yellow fever virus. Required post-entry of the virus to facilitate the ER membrane remodeling necessary to form replication organelles. The sequence is that of Transmembrane protein 41B from Homo sapiens (Human).